The following is a 124-amino-acid chain: MVAGPACSKFLPQDPPPPSVTLVLHDLTQEEDEQDFVTLHAQYRPTFKDKTPRRPGYNPRAAPCHIQRLSARCSVFFVQVGCPCGQPLKIAVQSTPDCISQFEQLLRGPLDLLCPHCASRCYGR.

Residues V2 to T51 form an E7 terminal domain region. A zinc finger spans residues C82–C117. Residues I99–R107 carry the Nuclear export signal motif.

The protein belongs to the papillomaviridae E7 protein family. As to quaternary structure, homodimer. Homooligomer. Interacts with host RB1; this interaction induces dissociation of RB1-E2F1 complex thereby disrupting RB1 activity. Interacts with host EP300; this interaction represses EP300 transcriptional activity. Interacts with protein E2; this interaction inhibits E7 oncogenic activity. Interacts with host TMEM173/STING; this interaction impairs the ability of TMEM173/STING to sense cytosolic DNA and promote the production of type I interferon (IFN-alpha and IFN-beta). In terms of processing, highly phosphorylated.

Its subcellular location is the host cytoplasm. The protein resides in the host nucleus. In terms of biological role, plays a role in viral genome replication by driving entry of quiescent cells into the cell cycle. Stimulation of progression from G1 to S phase allows the virus to efficiently use the cellular DNA replicating machinery to achieve viral genome replication. E7 protein has both transforming and trans-activating activities. Induces the disassembly of the E2F1 transcription factor from RB1, with subsequent transcriptional activation of E2F1-regulated S-phase genes. Interferes with host histone deacetylation mediated by HDAC1 and HDAC2, leading to transcription activation. Also plays a role in the inhibition of both antiviral and antiproliferative functions of host interferon alpha. Interaction with host TMEM173/STING impairs the ability of TMEM173/STING to sense cytosolic DNA and promote the production of type I interferon (IFN-alpha and IFN-beta). This is Protein E7 from Bovine papillomavirus type 5.